The primary structure comprises 246 residues: Proteasome subunit alpha type-6-B (246 aa).

This sequence belongs to the peptidase T1A family. As to quaternary structure, component of the 20S core complex of the 26S proteasome. The 26S proteasome is composed of a core protease (CP), known as the 20S proteasome, capped at one or both ends by the 19S regulatory particle (RP/PA700). The 20S proteasome core is composed of 28 subunits that are arranged in four stacked rings, resulting in a barrel-shaped structure. The two end rings are each formed by seven alpha subunits, and the two central rings are each formed by seven beta subunits. The catalytic chamber with the active sites is on the inside of the barrel.

It is found in the cytoplasm. The protein resides in the nucleus. The proteasome is a multicatalytic proteinase complex which is characterized by its ability to cleave peptides with Arg, Phe, Tyr, Leu, and Glu adjacent to the leaving group at neutral or slightly basic pH. The proteasome has an ATP-dependent proteolytic activity. The sequence is that of Proteasome subunit alpha type-6-B (PAA2) from Arabidopsis thaliana (Mouse-ear cress).